Here is an 832-residue protein sequence, read N- to C-terminus: DEAD-box ATP-dependent RNA helicase 13 (832 aa).

The span at 1–12 (MAAAPPPPPPPQ) shows a compositional bias: pro residues. Disordered regions lie at residues 1-59 (MAAA…TMVE) and 91-173 (VEDL…DDNV). The span at 29–42 (RKGKKSRGAKKPRR) shows a compositional bias: basic residues. Residues 43-55 (AAAAAAASTSSAG) show a composition bias toward low complexity. Basic residues predominate over residues 105-114 (QKKKKRKKRK). Residues 128 to 137 (LVVECEEEGE) are compositionally biased toward acidic residues. Basic residues predominate over residues 141–155 (KRVKKKRRSRKKRKV). Positions 156–167 (KEMEEKMESKED) are enriched in basic and acidic residues. The Q motif signature appears at 198–226 (YAWRELRLHPLLITAVRRLGFKEPTPIQK). The 218-residue stretch at 230-447 (PAAAHQGKDV…KLKRGLVTAK (218 aa)) folds into the Helicase ATP-binding domain. 243 to 250 (AETGSGKT) lines the ATP pocket. A DEAD box motif is present at residues 371–374 (DEAD). Positions 484–645 (KLEESFIECS…QFPVDHAYMP (162 aa)) constitute a Helicase C-terminal domain. The tract at residues 800 to 832 (RRLAENWRRKKQKEKKSTREQKRKEKRIAKERD) is disordered. The segment covering 814 to 832 (KKSTREQKRKEKRIAKERD) has biased composition (basic and acidic residues).

It belongs to the DEAD box helicase family. DDX24/MAK5 subfamily.

The enzyme catalyses ATP + H2O = ADP + phosphate + H(+). This Oryza sativa subsp. japonica (Rice) protein is DEAD-box ATP-dependent RNA helicase 13.